Consider the following 421-residue polypeptide: Stemmadenine O-acetyltransferase (421 aa).

Residues 1–21 form a disordered region; it reads MAPQMQILSEELIQPSSPTPQ. Catalysis depends on proton acceptor residues His160 and Asp362.

The protein belongs to the plant acyltransferase family. Monomer. As to expression, expressed in leaf epidermis.

The enzyme catalyses 15alpha-stemmadenine + acetyl-CoA = O-acetyl-15alpha-stemmadenine + CoA. It functions in the pathway alkaloid biosynthesis. In terms of biological role, component of iboga and aspidosperma monoterpenoid indole alkaloids (MIAs, e.g. tabersonine and catharanthine) biosynthesis pathway from 19E-geissoschizine. Acetyltransferase that catalyzes the formation of O-acetylstemmadenine from stemmadenine. In Catharanthus roseus (Madagascar periwinkle), this protein is Stemmadenine O-acetyltransferase.